We begin with the raw amino-acid sequence, 244 residues long: Adiponectin (244 aa).

The N-terminal stretch at 1-18 (MLLLGAVLLLLALPGHDQ) is a signal peptide. O-linked (GalNAc...) threonine glycosylation is found at Thr21 and Thr22. Residue Lys33 is modified to 5-hydroxylysine. Residue Cys36 is modified to S-(2-succinyl)cysteine. Residues 40 to 101 (MAGIPGHPGH…RGFPGIQGRK (62 aa)) form a disordered region. The Collagen-like domain occupies 42-107 (GIPGHPGHNG…QGRKGEPGEG (66 aa)). A 4-hydroxyproline mark is found at Pro44, Pro47, and Pro53. The span at 55-70 (RDGRDGTPGEKGEKGD) shows a compositional bias: basic and acidic residues. Residues Lys65 and Lys68 each carry the 5-hydroxylysine modification. Residues Lys65 and Lys68 are each glycosylated (O-linked (Gal...) hydroxylysine; partial). 4-hydroxyproline; partial occurs at positions 71 and 76. Lys77 bears the 5-hydroxylysine mark. O-linked (Gal...) hydroxylysine; partial glycosylation is present at Lys77. 4-hydroxyproline is present on Pro91. Pro95 bears the 4-hydroxyproline; partial mark. Residue Lys101 is modified to 5-hydroxylysine. An O-linked (Gal...) hydroxylysine; partial glycan is attached at Lys101. A C1q domain is found at 108 to 244 (AYVYRSAFSV…TGFLLYHDTN (137 aa)).

In terms of assembly, homomultimer. Forms trimers, hexamers and 12- to 18-mers. The trimers (low molecular weight complexes / LMW) are assembled via non-covalent interactions of the collagen-like domains in a triple helix and hydrophobic interactions within the globular C1q domain. Several trimers can associate to form disulfide-linked hexamers (middle molecular weight complexes / MMW) and larger complexes (higher molecular weight / HMW). The HMW-complex assembly is also modulated by the degree of lysine hydroxylation and glycosylation. LMW, MMW and HMW complexes bind to HBEGF, MMW and HMW complexes bind to PDGFB, and HMW complex binds to FGF2. Interacts with CTRP9 via the C1q domain (heterotrimeric complex). In terms of processing, HMW complexes are more extensively glycosylated than smaller oligomers. Hydroxylation and glycosylation of the lysine residues within the collagen-like domain of adiponectin seem to be critically involved in regulating the formation and/or secretion of HMW complexes and consequently contribute to the insulin-sensitizing activity of adiponectin in hepatocytes. O-glycosylated. Not N-glycosylated. O-linked glycans on hydroxylysines consist of Glc-Gal disaccharides bound to the oxygen atom of post-translationally added hydroxyl groups. Sialylated to varying degrees depending on tissue. Thr-22 appears to be the major site of sialylation. Higher sialylation found in SGBS adipocytes than in HEK fibroblasts. Sialylation is not required neither for heterodimerization nor for secretion. Not sialylated on the glycosylated hydroxylysines. Desialylated forms are rapidly cleared from the circulation. Post-translationally, succination of Cys-36 by the Krebs cycle intermediate fumarate, which leads to S-(2-succinyl)cysteine residues, inhibits polymerization and secretion of adiponectin. Adiponectin is a major target for succination in both adipocytes and adipose tissue of diabetic mammals. It was proposed that succination of proteins is a biomarker of mitochondrial stress and accumulation of Krebs cycle intermediates in adipose tissue in diabetes and that succination of adiponectin may contribute to the decrease in plasma adiponectin in diabetes. In terms of tissue distribution, synthesized exclusively by adipocytes and secreted into plasma.

Its subcellular location is the secreted. Polymerization and secretion of adiponectin is inhibited by succination of cysteine residues by the Krebs cycle intermediate fumarate, which leads to S-(2-succinyl)cysteine residues. Its function is as follows. Important adipokine involved in the control of fat metabolism and insulin sensitivity, with direct anti-diabetic, anti-atherogenic and anti-inflammatory activities. Stimulates AMPK phosphorylation and activation in the liver and the skeletal muscle, enhancing glucose utilization and fatty-acid combustion. Antagonizes TNF-alpha by negatively regulating its expression in various tissues such as liver and macrophages, and also by counteracting its effects. Inhibits endothelial NF-kappa-B signaling through a cAMP-dependent pathway. May play a role in cell growth, angiogenesis and tissue remodeling by binding and sequestering various growth factors with distinct binding affinities, depending on the type of complex, LMW, MMW or HMW. In Homo sapiens (Human), this protein is Adiponectin (ADIPOQ).